A 1392-amino-acid polypeptide reads, in one-letter code: DNA-directed RNA polymerase subunit beta'' (1392 aa).

Positions 224, 295, 302, and 305 each coordinate Zn(2+).

The protein belongs to the RNA polymerase beta' chain family. RpoC2 subfamily. In terms of assembly, in plastids the minimal PEP RNA polymerase catalytic core is composed of four subunits: alpha, beta, beta', and beta''. When a (nuclear-encoded) sigma factor is associated with the core the holoenzyme is formed, which can initiate transcription. The cofactor is Zn(2+).

It is found in the plastid. The protein resides in the chloroplast. The enzyme catalyses RNA(n) + a ribonucleoside 5'-triphosphate = RNA(n+1) + diphosphate. DNA-dependent RNA polymerase catalyzes the transcription of DNA into RNA using the four ribonucleoside triphosphates as substrates. This chain is DNA-directed RNA polymerase subunit beta'', found in Solanum bulbocastanum (Wild potato).